The primary structure comprises 591 residues: V-type ATP synthase alpha chain (591 aa).

232 to 239 is an ATP binding site; that stretch reads GPFGAGKT.

This sequence belongs to the ATPase alpha/beta chains family.

The catalysed reaction is ATP + H2O + 4 H(+)(in) = ADP + phosphate + 5 H(+)(out). In terms of biological role, produces ATP from ADP in the presence of a proton gradient across the membrane. The V-type alpha chain is a catalytic subunit. In Clostridium perfringens (strain SM101 / Type A), this protein is V-type ATP synthase alpha chain.